Reading from the N-terminus, the 385-residue chain is Citrate synthase (385 aa).

Residues H223, H263, and D318 contribute to the active site.

Belongs to the citrate synthase family. In terms of assembly, homodimer.

The enzyme catalyses oxaloacetate + acetyl-CoA + H2O = citrate + CoA + H(+). It participates in carbohydrate metabolism; tricarboxylic acid cycle; isocitrate from oxaloacetate: step 1/2. Its activity is regulated as follows. Allosterically inhibited by NADH. In Thermoplasma acidophilum (strain ATCC 25905 / DSM 1728 / JCM 9062 / NBRC 15155 / AMRC-C165), this protein is Citrate synthase (gltA).